Reading from the N-terminus, the 1067-residue chain is Probable importin subunit beta-4 (1067 aa).

In terms of domain architecture, Importin N-terminal spans 27–94 (ATRALETKYL…RSNLLDITLK (68 aa)). 6 HEAT repeats span residues 159–196 (KLLL…VLES), 379–416 (GNLP…EIPT), 420–457 (KHHA…GLDK), 591–633 (PFLE…SVET), 890–927 (PFTR…FSTE), and 1013–1050 (QHLG…EIAP).

Belongs to the importin beta family.

It is found in the cytoplasm. It localises to the nucleus. The protein localises to the nucleus envelope. Functionally, required for nuclear protein import, its predominant substrate seems to be ribosomal proteins. Binds to nucleoporins and the GTP-bound form of gsp1 (Ran). In Schizosaccharomyces pombe (strain 972 / ATCC 24843) (Fission yeast), this protein is Probable importin subunit beta-4 (kap123).